We begin with the raw amino-acid sequence, 348 residues long: MVRTINETFLKACRGERTDYVPAWYMRQAGRSQPEYRKIKEKYSLFEITHNPELCAYVTKLPVDQYNVDAAILYKDIMSPLPAIGVDVEIKSGIGPVIDNPIRSLQDVEKLGEINPEDDVPYILDTIRLLTTEMLDVPLIGFSGAPFTLASYMIEGGPSRNYHNTKAFMYAEPKAWFALMDKLADMVITYLKAQINAGAKAVQIFDSWVGTVNVADYRVFIKPAMERIFAEVRTMGVPMIMHGVGAPHLVNEWHDLPLDVVGLDWRLPIEEARARGVHKAVQGNMDPSFLLAPWSVIEEHVKGILDQGMKQPGYIFNLGHGVFPEVNPDTLKRLTTFIHEYSKGQLAK.

Residues 27–31 (RQAGR), F46, D76, Y152, S207, and H320 contribute to the substrate site.

Belongs to the uroporphyrinogen decarboxylase family. Homodimer.

The protein resides in the cytoplasm. It catalyses the reaction uroporphyrinogen III + 4 H(+) = coproporphyrinogen III + 4 CO2. Its pathway is porphyrin-containing compound metabolism; protoporphyrin-IX biosynthesis; coproporphyrinogen-III from 5-aminolevulinate: step 4/4. Its function is as follows. Catalyzes the decarboxylation of four acetate groups of uroporphyrinogen-III to yield coproporphyrinogen-III. The chain is Uroporphyrinogen decarboxylase from Bacillus cereus (strain AH820).